The primary structure comprises 78 residues: Large ribosomal subunit protein bL28 (78 aa).

Belongs to the bacterial ribosomal protein bL28 family.

In Psychrobacter sp. (strain PRwf-1), this protein is Large ribosomal subunit protein bL28.